Here is a 720-residue protein sequence, read N- to C-terminus: Glycine--tRNA ligase beta subunit (720 aa).

The protein belongs to the class-II aminoacyl-tRNA synthetase family. Tetramer of two alpha and two beta subunits.

Its subcellular location is the cytoplasm. The enzyme catalyses tRNA(Gly) + glycine + ATP = glycyl-tRNA(Gly) + AMP + diphosphate. The protein is Glycine--tRNA ligase beta subunit of Acidovorax ebreus (strain TPSY) (Diaphorobacter sp. (strain TPSY)).